A 396-amino-acid chain; its full sequence is Dihydrolipoyllysine-residue acetyltransferase component of pyruvate dehydrogenase complex (396 aa).

Positions 1-69 (MPDIGLEEVE…KTDALIMRCE (69 aa)) constitute a Lipoyl-binding domain. At Lys-35 the chain carries N6-lipoyllysine. The Peripheral subunit-binding (PSBD) domain maps to 104–141 (HATPLIRRLARNLNINLYDVVGTGPKNRILKEDLDLYQ). His-369 is an active-site residue.

This sequence belongs to the 2-oxoacid dehydrogenase family. Forms a 24-polypeptide structural core with octahedral symmetry. The cofactor is (R)-lipoate.

The enzyme catalyses N(6)-[(R)-dihydrolipoyl]-L-lysyl-[protein] + acetyl-CoA = N(6)-[(R)-S(8)-acetyldihydrolipoyl]-L-lysyl-[protein] + CoA. Its function is as follows. The pyruvate dehydrogenase complex catalyzes the overall conversion of pyruvate to acetyl-CoA and CO(2). It contains multiple copies of three enzymatic components: pyruvate dehydrogenase (E1), dihydrolipoamide acetyltransferase (E2) and lipoamide dehydrogenase (E3). In Buchnera aphidicola subsp. Acyrthosiphon pisum (strain APS) (Acyrthosiphon pisum symbiotic bacterium), this protein is Dihydrolipoyllysine-residue acetyltransferase component of pyruvate dehydrogenase complex (aceF).